Reading from the N-terminus, the 461-residue chain is Protein-serine O-palmitoleoyltransferase porcupine (461 aa).

Over 1 to 17 (MATFSRQEFFQQLLQGC) the chain is Cytoplasmic. The chain crosses the membrane as a helical span at residues 18–38 (LLPTVQQGLDQIWLLLTICFA). Residues 39–66 (CRLLWRLGLPSYLKHASTVAGGFFSLYH) lie on the Extracellular side of the membrane. Residues 67 to 87 (FFQLHMVWVVLLSLLCYLVLF) traverse the membrane as a helical segment. Residues 88–95 (LCRHSSHR) lie on the Cytoplasmic side of the membrane. The chain crosses the membrane as a helical span at residues 96 to 116 (GVFLSVTILIYLLMGEMHMVD). The Extracellular segment spans residues 117 to 152 (TVTWHKMRGAQMIVAMKAVSLGFDLDRGEVGAVPSP). A helical transmembrane segment spans residues 153–173 (VEFMGYLYFVGTIVFGPWISF). At 174 to 198 (HSYLQAVQGRPLSRRWLKKVARSLA) the chain is on the cytoplasmic side. The chain crosses the membrane as a helical span at residues 199 to 219 (LALLCLVLSTCVGPYLFPYFI). The Extracellular portion of the chain corresponds to 220–252 (PLDGDRLLRNKKRKARGTMVRWLRAYESAVSFH). Residues 253 to 273 (FSNYFVGFLSEATATLAGAGF) traverse the membrane as a helical segment. At 274 to 337 (TEEKDHLEWD…SAVLVTYAAS (64 aa)) the chain is on the cytoplasmic side. The helical transmembrane segment at 338-358 (ALLHGFSFHLAAVLLSLAFIT) threads the bilayer. His341 is an active-site residue. Residues 359–396 (YVEHVLRKRLAQILSACILSKRCLPDCSHRHRLGLGVR) are Extracellular-facing. The helical transmembrane segment at 397-417 (ALNLLFGALAIFHLSYLGSLF) threads the bilayer. Residues 418–461 (DVDVDDTTEEQGYGMAYTVHKWSELSWASHWVTFGCWIFYRLIG) are Cytoplasmic-facing.

Belongs to the membrane-bound acyltransferase family. Porcupine subfamily. In terms of assembly, interacts with WNT1, WNT3, WNT3A, WNT4, WNT5A, WNT5B, WNT6, WNT7A and WNT7B. In terms of tissue distribution, expressed in brain, heart, kidney, liver, lung, muscle, spleen and testis. Isoform 4 is strongly expressed in kidney, liver, lung, spleen and testis. Isoform 1 is strongly expressed in brain, heart and muscle and poorly in kidney, liver, lung, spleen and testis.

Its subcellular location is the endoplasmic reticulum membrane. It carries out the reaction [Wnt protein]-L-serine + (9Z)-hexadecenoyl-CoA = [Wnt protein]-O-(9Z)-hexadecenoyl-L-serine + CoA. In terms of biological role, protein-serine O-palmitoleoyltransferase that acts as a key regulator of the Wnt signaling pathway by mediating the attachment of palmitoleate, a 16-carbon monounsaturated fatty acid (C16:1(9Z)), to Wnt proteins. Serine palmitoleoylation of WNT proteins is required for efficient binding to frizzled receptors. The sequence is that of Protein-serine O-palmitoleoyltransferase porcupine from Mus musculus (Mouse).